The chain runs to 496 residues: Glutamyl-tRNA(Gln) amidotransferase subunit A (496 aa).

Catalysis depends on charge relay system residues K75 and S150. Residue S174 is the Acyl-ester intermediate of the active site.

Belongs to the amidase family. GatA subfamily. As to quaternary structure, heterotrimer of A, B and C subunits.

The enzyme catalyses L-glutamyl-tRNA(Gln) + L-glutamine + ATP + H2O = L-glutaminyl-tRNA(Gln) + L-glutamate + ADP + phosphate + H(+). Its function is as follows. Allows the formation of correctly charged Gln-tRNA(Gln) through the transamidation of misacylated Glu-tRNA(Gln) in organisms which lack glutaminyl-tRNA synthetase. The reaction takes place in the presence of glutamine and ATP through an activated gamma-phospho-Glu-tRNA(Gln). This Burkholderia pseudomallei (strain 1106a) protein is Glutamyl-tRNA(Gln) amidotransferase subunit A.